The following is a 314-amino-acid chain: Epithelial cell adhesion molecule (314 aa).

The signal sequence occupies residues 1–23; that stretch reads MAPPQVLAFGLLLAAATATFAAA. At 24–265 the chain is on the extracellular side; it reads QEECVCENYK…APEFSMQGLK (242 aa). Disulfide bonds link Cys-27–Cys-46, Cys-29–Cys-59, Cys-38–Cys-48, Cys-66–Cys-99, Cys-110–Cys-116, and Cys-118–Cys-135. Residues 63-135 enclose the Thyroglobulin type-1 domain; the sequence is AAKCLVMKAE…RTDKDTEITC (73 aa). Asn-74 is a glycosylation site (N-linked (GlcNAc...) asparagine; partial). The N-linked (GlcNAc...) asparagine glycan is linked to Asn-111. Asn-198 is a glycosylation site (N-linked (GlcNAc...) asparagine). Residues 266–288 traverse the membrane as a helical segment; the sequence is AGVIAVIVVVVIAVVAGIVVLVI. Residues 289-314 lie on the Cytoplasmic side of the membrane; that stretch reads SRKKRMAKYEKAEIKEMGEMHRELNA.

This sequence belongs to the EPCAM family. As to quaternary structure, monomer. Interacts with phosphorylated CLDN7. In terms of processing, hyperglycosylated in carcinoma tissue as compared with autologous normal epithelia. Glycosylation at Asn-198 is crucial for protein stability. As to expression, highly and selectively expressed by undifferentiated rather than differentiated embryonic stem cells (ESC). Levels rapidly diminish as soon as ESC's differentiate (at protein levels). Expressed in almost all epithelial cell membranes but not on mesodermal or neural cell membranes. Found on the surface of adenocarcinoma.

The protein localises to the lateral cell membrane. It is found in the cell junction. The protein resides in the tight junction. May act as a physical homophilic interaction molecule between intestinal epithelial cells (IECs) and intraepithelial lymphocytes (IELs) at the mucosal epithelium for providing immunological barrier as a first line of defense against mucosal infection. Plays a role in embryonic stem cells proliferation and differentiation. Up-regulates the expression of FABP5, MYC and cyclins A and E. The protein is Epithelial cell adhesion molecule (EPCAM) of Homo sapiens (Human).